A 210-amino-acid chain; its full sequence is DNA-directed RNA polymerases I, II, and III subunit RPABC1 (210 aa).

N-acetylmethionine is present on Met1. A Glycyl lysine isopeptide (Lys-Gly) (interchain with G-Cter in SUMO2) cross-link involves residue Lys81.

Belongs to the archaeal Rpo5/eukaryotic RPB5 RNA polymerase subunit family. As to quaternary structure, component of the RNA polymerase I (Pol I), RNA polymerase II (Pol II) and RNA polymerase III (Pol III) complexes consisting of at least 13, 12 and 17 subunits, respectively. Pol I complex consists of a ten-subunit catalytic core composed of POLR1A/RPA1, POLR1B/RPA2, POLR1C/RPAC1, POLR1D/RPAC2, POLR1H/RPA12, POLR2E/RPABC1, POLR2F/RPABC2, POLR2H/RPABC3, POLR2K/RPABC4 and POLR2L/RPABC5; a mobile stalk subunit POLR1F/RPA43 protruding from the core and additional subunits homologous to general transcription factors POLR1E/RPA49 and POLR1G/RPA34. Part of Pol I pre-initiation complex (PIC), in which Pol I core assembles with RRN3 and promoter-bound UTBF and SL1/TIF-IB complex. Pol II complex contains a ten-subunit catalytic core composed of POLR2A/RPB1, POLR2B/RPB2, POLR2C/RPB3, POLR2I/RPB9, POLR2J/RPB11, POLR2E/RPABC1, POLR2F/RPABC2, POLR2H/RPABC3, POLR2K/RPABC4 and POLR2L/RPABC5 and a mobile stalk composed of two subunits POLR2D/RPB4 and POLR2G/RPB7. Part of Pol II(G) complex, in which Pol II core associates with an additional subunit POLR2M; unlike conventional Pol II, Pol II(G) functions as a transcriptional repressor. Part of TBP-based Pol II pre-initiation complex (PIC), in which Pol II core assembles with general transcription factors and other specific initiation factors including GTF2E1, GTF2E2, GTF2F1, GTF2F2, TCEA1, ERCC2, ERCC3, GTF2H2, GTF2H3, GTF2H4, GTF2H5, GTF2A1, GTF2A2, GTF2B and TBP; this large multi-subunit PIC complex mediates DNA unwinding and targets Pol II core to the transcription start site where the first phosphodiester bond forms. In Pol II complex, this subunit is present in 2-fold molar excess over the other subunits. Pol III complex consists of a ten-subunit catalytic core composed of POLR3A/RPC1, POLR3B/RPC2, POLR1C/RPAC1, POLR1D/RPAC2, POLR3K/RPC10, POLR2E/RPABC1, POLR2F/RPABC2, POLR2H/RPABC3, POLR2K/RPABC4 and POLR2L/RPABC5; a mobile stalk composed of two subunits POLR3H/RPC8 and CRCP/RPC9, protruding from the core and functioning primarily in transcription initiation; and additional subunits homologous to general transcription factors of the RNA polymerase II machinery, POLR3C/RPC3-POLR3F/RPC6-POLR3G/RPC7 heterotrimer required for transcription initiation and POLR3D/RPC4-POLR3E/RPC5 heterodimer involved in both transcription initiation and termination. Component of the PAQosome complex which is responsible for the biogenesis of several protein complexes and which consists of R2TP complex members RUVBL1, RUVBL2, RPAP3 and PIH1D1, URI complex members PFDN2, PFDN6, PDRG1, UXT and URI1 as well as ASDURF, POLR2E and DNAAF10/WDR92. Interacts with URI1. In terms of assembly, (Microbial infection) Interacts with HBV protein X.

It is found in the nucleus. The protein localises to the nucleolus. DNA-dependent RNA polymerase catalyzes the transcription of DNA into RNA using the four ribonucleoside triphosphates as substrates. Common component of RNA polymerases I, II and III which synthesize ribosomal RNA precursors, mRNA precursors and many functional non-coding RNAs, and small RNAs, such as 5S rRNA and tRNAs, respectively. Pol II is the central component of the basal RNA polymerase II transcription machinery. Pols are composed of mobile elements that move relative to each other. In Pol II, POLR2E/RPABC1 is part of the lower jaw surrounding the central large cleft and thought to grab the incoming DNA template. This chain is DNA-directed RNA polymerases I, II, and III subunit RPABC1, found in Homo sapiens (Human).